Here is a 240-residue protein sequence, read N- to C-terminus: Uridylate kinase (240 aa).

Position 13–16 (13–16 (KASG)) interacts with ATP. The interval 21–26 (GSQGFG) is involved in allosteric activation by GTP. Residue G55 participates in UMP binding. ATP is bound by residues G56 and R60. Residues D75 and 136-143 (TGNPFFTT) contribute to the UMP site. ATP contacts are provided by T163, Q164, Y169, and D172.

This sequence belongs to the UMP kinase family. Homohexamer.

It is found in the cytoplasm. It carries out the reaction UMP + ATP = UDP + ADP. It functions in the pathway pyrimidine metabolism; CTP biosynthesis via de novo pathway; UDP from UMP (UMPK route): step 1/1. Allosterically activated by GTP. Inhibited by UTP. Functionally, catalyzes the reversible phosphorylation of UMP to UDP. This chain is Uridylate kinase, found in Brucella abortus biovar 1 (strain 9-941).